The sequence spans 197 residues: GTP cyclohydrolase-2 (197 aa).

A GTP-binding site is contributed by 50 to 54 (RIHSE). Zn(2+) is bound by residues C55, C66, and C68. GTP contacts are provided by residues Q71, 93 to 95 (EGR), and T115. The Proton acceptor role is filled by D127. The active-site Nucleophile is the R129. GTP is bound by residues T150 and K155.

This sequence belongs to the GTP cyclohydrolase II family. Zn(2+) serves as cofactor.

The enzyme catalyses GTP + 4 H2O = 2,5-diamino-6-hydroxy-4-(5-phosphoribosylamino)-pyrimidine + formate + 2 phosphate + 3 H(+). It participates in cofactor biosynthesis; riboflavin biosynthesis; 5-amino-6-(D-ribitylamino)uracil from GTP: step 1/4. In terms of biological role, catalyzes the conversion of GTP to 2,5-diamino-6-ribosylamino-4(3H)-pyrimidinone 5'-phosphate (DARP), formate and pyrophosphate. The protein is GTP cyclohydrolase-2 of Aeromonas hydrophila subsp. hydrophila (strain ATCC 7966 / DSM 30187 / BCRC 13018 / CCUG 14551 / JCM 1027 / KCTC 2358 / NCIMB 9240 / NCTC 8049).